The chain runs to 587 residues: MSGDYEDDLCRRALILVSDLCARVRDADTNDRCQEFNELRIRGYPRGPDADISVSLLSVIVTFCGIVLLGVSLFVSWKLCWVPWRDKGGSAVGGGPLRKDLAPGVGLAGLVGGGGHHLGASLGGHPLLGGPHHHGHTAHHPPFAELLEPGGLGGSEPPEPSYLDMDSYPEAAVASVVAAGVKPSQTSPELPSEGGTGSGLLLLPPSGGGLPSAQSHQQVTSLAPTTRYPALPRPLTQQTLTTQADPSTEERPPALPLPLPGGEEKAKLIGQIKPELYQGTGPGGRRGGGSGEAGAPCGRISFALRYLYGSDHLVVRILQALDLPAKDSNGFSDPYVKIYLLPDRKKKFQTKVHRKTLNPIFNETFQFSVPLAELAQRKLHFSVYDFDRFSRHDLIGQVVLDNLLELAEQPPDRPLWRDILEGGSEKADLGELNFSLCYLPTAGRLTVTIIKASNLKAMDLTGFSDPYVKASLISEGRRLKKRKTSIKKNTLNPTYNEALVFDVAPESVENVGLSIAVVDYDCIGHNEVIGVCRVGPEAADPHGREHWAEMLANPRKPVEHWHQLVEEKTLSSFTKGGKGLSEKENSE.

Over 1-54 (MSGDYEDDLCRRALILVSDLCARVRDADTNDRCQEFNELRIRGYPRGPDADISV) the chain is Vesicular. A cysteine motif region spans residues 10-34 (CRRALILVSDLCARVRDADTNDRCQ). Residues 55–75 (SLLSVIVTFCGIVLLGVSLFV) traverse the membrane as a helical segment. Residues 76 to 587 (SWKLCWVPWR…KGLSEKENSE (512 aa)) lie on the Cytoplasmic side of the membrane. Low complexity predominate over residues 183-205 (PSQTSPELPSEGGTGSGLLLLPP). The interval 183-258 (PSQTSPELPS…EERPPALPLP (76 aa)) is disordered. Residues 213 to 224 (AQSHQQVTSLAP) show a composition bias toward polar residues. Residues 229-244 (PALPRPLTQQTLTTQA) are compositionally biased toward low complexity. The residue at position 286 (Arg-286) is an Omega-N-methylarginine. C2 domains lie at 296 to 417 (PCGR…PLWR) and 428 to 562 (DLGE…EHWH). The Ca(2+) site is built by Asp-327, Asp-333, Asp-385, Phe-386, Asp-387, Ser-390, Asp-393, Asp-459, Asp-465, Asp-519, and Asp-521.

The protein belongs to the synaptotagmin family. As to quaternary structure, homodimer; disulfide-linked via the cysteine motif. Can also form heterodimers with SYT6, SYT9 and SYT10. Requires Ca(2+) as cofactor.

The protein localises to the cell membrane. It is found in the cytoplasmic vesicle. It localises to the secretory vesicle membrane. In terms of biological role, ca(2+) sensor involved in Ca(2+)-dependent exocytosis of secretory vesicles through Ca(2+) and phospholipid binding to the C2 domain. Ca(2+) induces binding of the C2-domains to phospholipid membranes and to assembled SNARE-complexes; both actions contribute to triggering exocytosis. Plays a role in dendrite formation by melanocytes. In Mus musculus (Mouse), this protein is Synaptotagmin-3 (Syt3).